The primary structure comprises 3169 residues: FRAS1-related extracellular matrix protein 2 (3169 aa).

The interval 1 to 24 (MHSAGTPGLSSRRTGNSTSFQPGP) is disordered. The first 46 residues, 1–46 (MHSAGTPGLSSRRTGNSTSFQPGPPPPPRLLLLLLLLLSLVSRVPA), serve as a signal peptide directing secretion. Over residues 8–21 (GLSSRRTGNSTSFQ) the composition is skewed to polar residues. Over 47–3113 (QPAAFGRALL…SPSSAVSLVT (3067 aa)) the chain is Extracellular. 12 CSPG repeats span residues 319–413 (KPSF…LELE), 438–537 (APVV…LRMV), 560–675 (PPVL…FRVQ), 700–807 (PPEL…FQVE), 828–919 (QPPE…LEVS), 945–1037 (HPTG…LSLS), 1066–1168 (APEI…FRCS), 1189–1282 (EQPE…IKLT), 1303–1399 (TPRM…FDVT), 1420–1512 (VFPD…FQVT), 1532–1621 (KKPV…FTVT), and 1655–1752 (VPQI…FAVE). A glycan (N-linked (GlcNAc...) asparagine) is linked at asparagine 358. Asparagine 1244 and asparagine 1369 each carry an N-linked (GlcNAc...) asparagine glycan. N-linked (GlcNAc...) asparagine glycans are attached at residues asparagine 1584 and asparagine 1741. Calx-beta domains lie at 1759-1858 (LTYQ…VVLS), 1871-1982 (ATVE…VLLS), 1997-2103 (QVTI…LVLR), 2118-2220 (VSIN…LVLG), and 2238-2342 (TLIR…VHLK). Residues 3036–3057 (SLVSQGKPQSTTKSRKKREIRS) are disordered. A compositionally biased stretch (polar residues) spans 3037–3047 (LVSQGKPQSTT). A helical membrane pass occupies residues 3114–3134 (VVGGTTVGLLTICLTVIAVLM). The Cytoplasmic segment spans residues 3135–3169 (CRGKESFRGKDAPKGSSSSEPMVPPQSHHNDSSEV). The tract at residues 3141–3169 (FRGKDAPKGSSSSEPMVPPQSHHNDSSEV) is disordered.

This sequence belongs to the FRAS1 family. As to quaternary structure, interacts with FREM1.

The protein localises to the cell membrane. Functionally, extracellular matrix protein required for maintenance of the integrity of the skin epithelium and for maintenance of renal epithelia. Required for epidermal adhesion. Involved in the development of eyelids and the anterior segment of the eyeballs. The sequence is that of FRAS1-related extracellular matrix protein 2 (FREM2) from Homo sapiens (Human).